The primary structure comprises 326 residues: Probable sodium/potassium-transporting ATPase subunit beta-3 (326 aa).

Topologically, residues 1–59 (MMSSRTRKIYLFVFMFISTSLQLMNGEAKAEPETFRQFLYNKQKGTVLGRTGTSWCQIT) are cytoplasmic. A helical; Signal-anchor for type II membrane protein transmembrane segment spans residues 60-80 (VFYIIFYIFLSAFFIGCLAIF). At 81-326 (LKTLDPKVPR…DKKPVAAPAA (246 aa)) the chain is on the lumenal side. 2 N-linked (GlcNAc...) asparagine glycosylation sites follow: asparagine 144 and asparagine 147. Cysteine 234 and cysteine 291 are joined by a disulfide.

The protein belongs to the X(+)/potassium ATPases subunit beta family. The sodium/potassium-transporting ATPase is composed of a catalytic alpha subunit, an auxiliary non-catalytic beta subunit and an additional regulatory subunit.

It localises to the cell membrane. Functionally, this is the non-catalytic component of the active enzyme, which catalyzes the hydrolysis of ATP coupled with the exchange of Na(+) and K(+) ions across the plasma membrane. The beta subunit regulates, through assembly of alpha/beta heterodimers, the number of sodium pumps transported to the plasma membrane. Implicated in genomic response to various soil bacteria that affects fitness, lifespan and brood size. This chain is Probable sodium/potassium-transporting ATPase subunit beta-3 (nkb-3), found in Caenorhabditis briggsae.